A 172-amino-acid polypeptide reads, in one-letter code: General stress protein 18 (172 aa).

One can recognise a PfpI endopeptidase domain in the interval 3-171 (KKIAVVLTYY…FNRESLALLE (169 aa)). Cys-104 functions as the Nucleophile in the catalytic mechanism. Residue His-105 is part of the active site.

Belongs to the peptidase C56 family.

In terms of biological role, functions in the protection against aldehyde-stress, possibly by degrading damaged proteins. The sequence is that of General stress protein 18 (yfkM) from Bacillus subtilis (strain 168).